A 473-amino-acid polypeptide reads, in one-letter code: Cysteine--tRNA ligase (473 aa).

Cys-30 serves as a coordination point for Zn(2+). Residues 32 to 42 carry the 'HIGH' region motif; it reads MTVYDYCHIGH. Cys-213, His-238, and Glu-242 together coordinate Zn(2+). Residues 270–274 carry the 'KMSKS' region motif; sequence KMSKS. Lys-273 lines the ATP pocket.

Belongs to the class-I aminoacyl-tRNA synthetase family. As to quaternary structure, monomer. The cofactor is Zn(2+).

It localises to the cytoplasm. The enzyme catalyses tRNA(Cys) + L-cysteine + ATP = L-cysteinyl-tRNA(Cys) + AMP + diphosphate. This chain is Cysteine--tRNA ligase, found in Acinetobacter baylyi (strain ATCC 33305 / BD413 / ADP1).